The following is a 251-amino-acid chain: Imidazole glycerol phosphate synthase subunit HisF (251 aa).

Active-site residues include aspartate 11 and aspartate 130.

Belongs to the HisA/HisF family. As to quaternary structure, heterodimer of HisH and HisF.

The protein resides in the cytoplasm. It carries out the reaction 5-[(5-phospho-1-deoxy-D-ribulos-1-ylimino)methylamino]-1-(5-phospho-beta-D-ribosyl)imidazole-4-carboxamide + L-glutamine = D-erythro-1-(imidazol-4-yl)glycerol 3-phosphate + 5-amino-1-(5-phospho-beta-D-ribosyl)imidazole-4-carboxamide + L-glutamate + H(+). It participates in amino-acid biosynthesis; L-histidine biosynthesis; L-histidine from 5-phospho-alpha-D-ribose 1-diphosphate: step 5/9. Functionally, IGPS catalyzes the conversion of PRFAR and glutamine to IGP, AICAR and glutamate. The HisF subunit catalyzes the cyclization activity that produces IGP and AICAR from PRFAR using the ammonia provided by the HisH subunit. This is Imidazole glycerol phosphate synthase subunit HisF from Flavobacterium johnsoniae (strain ATCC 17061 / DSM 2064 / JCM 8514 / BCRC 14874 / CCUG 350202 / NBRC 14942 / NCIMB 11054 / UW101) (Cytophaga johnsonae).